We begin with the raw amino-acid sequence, 902 residues long: Mitochondrial aspartate-glutamate transporter AGC1 (902 aa).

Solcar repeat units follow at residues phenylalanine 528–arginine 614, leucine 622–aspartate 710, and leucine 725–phenylalanine 813. 6 consecutive transmembrane segments (helical) span residues phenylalanine 534 to isoleucine 554, glycine 591 to methionine 611, leucine 622 to threonine 642, glycine 681 to proline 702, leucine 731 to isoleucine 751, and phenylalanine 786 to alanine 806.

This sequence belongs to the mitochondrial carrier (TC 2.A.29) family.

It localises to the mitochondrion inner membrane. Functionally, calcium-dependent mitochondrial aspartate and glutamate carrier. Transport of glutamate in mitochondria is required for mitochondrial transamination reactions and ornithine synthesis. Plays also a role in malate-aspartate NADH shuttle, which is critical for growth on acetate and fatty acids. The polypeptide is Mitochondrial aspartate-glutamate transporter AGC1 (AGC1) (Saccharomyces cerevisiae (strain ATCC 204508 / S288c) (Baker's yeast)).